The chain runs to 396 residues: Elongation factor Tu (396 aa).

In terms of domain architecture, tr-type G spans 10-206 (KPHVNVGTIG…ALDTYIPTPE (197 aa)). Positions 19 to 26 (GHVDHGKT) are G1. 19-26 (GHVDHGKT) contributes to the GTP binding site. Thr-26 contacts Mg(2+). The segment at 60–64 (GITIN) is G2. A G3 region spans residues 81–84 (DCPG). Residues 81 to 85 (DCPGH) and 136 to 139 (NKCD) each bind GTP. The interval 136-139 (NKCD) is G4. Residues 174–176 (SAK) form a G5 region.

This sequence belongs to the TRAFAC class translation factor GTPase superfamily. Classic translation factor GTPase family. EF-Tu/EF-1A subfamily. Monomer.

It localises to the cytoplasm. It carries out the reaction GTP + H2O = GDP + phosphate + H(+). In terms of biological role, GTP hydrolase that promotes the GTP-dependent binding of aminoacyl-tRNA to the A-site of ribosomes during protein biosynthesis. The chain is Elongation factor Tu from Polynucleobacter asymbioticus (strain DSM 18221 / CIP 109841 / QLW-P1DMWA-1) (Polynucleobacter necessarius subsp. asymbioticus).